The chain runs to 433 residues: N-lysine methyltransferase SMYD2 (433 aa).

The region spanning 7-241 (GGLERFCSPG…PGEEVFTSYI (235 aa)) is the SET domain. 17 to 19 (KGR) serves as a coordination point for S-adenosyl-L-methionine. Zn(2+) contacts are provided by cysteine 52, cysteine 55, cysteine 65, cysteine 68, cysteine 74, cysteine 78, histidine 86, and cysteine 90. The segment at 52–90 (CEFCFARKEGLSKCGRCKQAFYCNVECQKEDWPMHKLEC) adopts an MYND-type zinc-finger fold. S-adenosyl-L-methionine is bound by residues histidine 137, 206 to 207 (NH), and 258 to 260 (YFF).

This sequence belongs to the class V-like SAM-binding methyltransferase superfamily. As to quaternary structure, interacts with RNA polymerase II and HELZ. Interacts with SIN3A and HDAC1. Interacts (via MYND-type zinc finger) with EPB41L3. Interacts (via SET domain) with p53/TP53. Interacts with RB1 and HSP90AA1.

It is found in the cytoplasm. It localises to the cytosol. The protein localises to the nucleus. It carries out the reaction L-lysyl(4)-[histone H3] + 3 S-adenosyl-L-methionine = N(6),N(6),N(6)-trimethyl-L-lysyl(4)-[histone H3] + 3 S-adenosyl-L-homocysteine + 3 H(+). The enzyme catalyses L-lysyl-[protein] + S-adenosyl-L-methionine = N(6)-methyl-L-lysyl-[protein] + S-adenosyl-L-homocysteine + H(+). Protein-lysine N-methyltransferase that methylates both histones and non-histone proteins, including p53/TP53 and RB1. Specifically trimethylates histone H3 'Lys-4' (H3K4me3) in vivo. The activity requires interaction with HSP90alpha. Shows even higher methyltransferase activity on p53/TP53. Monomethylates 'Lys-370' of p53/TP53, leading to decreased DNA-binding activity and subsequent transcriptional regulation activity of p53/TP53. Monomethylates RB1 at 'Lys-860'. The polypeptide is N-lysine methyltransferase SMYD2 (SMYD2) (Sus scrofa (Pig)).